The sequence spans 88 residues: MQAEIHPNYRPVVFLDATTGKKFLSASTVTSNDTTEFEGQEYPVIRMDITSDSHPFYTGKQKFTQADGAVDKFNKKFAGFGFKNNEDK.

The protein belongs to the bacterial ribosomal protein bL31 family. Type B subfamily. As to quaternary structure, part of the 50S ribosomal subunit.

This is Large ribosomal subunit protein bL31B from Leuconostoc citreum (strain KM20).